We begin with the raw amino-acid sequence, 588 residues long: Proline--tRNA ligase (588 aa).

Belongs to the class-II aminoacyl-tRNA synthetase family. ProS type 1 subfamily. In terms of assembly, homodimer.

The protein resides in the cytoplasm. It carries out the reaction tRNA(Pro) + L-proline + ATP = L-prolyl-tRNA(Pro) + AMP + diphosphate. Functionally, catalyzes the attachment of proline to tRNA(Pro) in a two-step reaction: proline is first activated by ATP to form Pro-AMP and then transferred to the acceptor end of tRNA(Pro). As ProRS can inadvertently accommodate and process non-cognate amino acids such as alanine and cysteine, to avoid such errors it has two additional distinct editing activities against alanine. One activity is designated as 'pretransfer' editing and involves the tRNA(Pro)-independent hydrolysis of activated Ala-AMP. The other activity is designated 'posttransfer' editing and involves deacylation of mischarged Ala-tRNA(Pro). The misacylated Cys-tRNA(Pro) is not edited by ProRS. The chain is Proline--tRNA ligase from Corynebacterium efficiens (strain DSM 44549 / YS-314 / AJ 12310 / JCM 11189 / NBRC 100395).